The chain runs to 396 residues: 1-deoxy-D-xylulose 5-phosphate reductoisomerase (396 aa).

NADPH-binding residues include threonine 15, glycine 16, serine 17, isoleucine 18, glycine 41, and asparagine 129. Residue lysine 130 participates in 1-deoxy-D-xylulose 5-phosphate binding. Residue glutamate 131 participates in NADPH binding. Mn(2+) is bound at residue aspartate 155. The 1-deoxy-D-xylulose 5-phosphate site is built by serine 156, glutamate 157, serine 182, and histidine 205. Glutamate 157 is a Mn(2+) binding site. Glycine 211 lines the NADPH pocket. The 1-deoxy-D-xylulose 5-phosphate site is built by serine 218, asparagine 223, lysine 224, and glutamate 227. Glutamate 227 provides a ligand contact to Mn(2+).

This sequence belongs to the DXR family. Mg(2+) serves as cofactor. Requires Mn(2+) as cofactor.

It carries out the reaction 2-C-methyl-D-erythritol 4-phosphate + NADP(+) = 1-deoxy-D-xylulose 5-phosphate + NADPH + H(+). It functions in the pathway isoprenoid biosynthesis; isopentenyl diphosphate biosynthesis via DXP pathway; isopentenyl diphosphate from 1-deoxy-D-xylulose 5-phosphate: step 1/6. Functionally, catalyzes the NADPH-dependent rearrangement and reduction of 1-deoxy-D-xylulose-5-phosphate (DXP) to 2-C-methyl-D-erythritol 4-phosphate (MEP). The polypeptide is 1-deoxy-D-xylulose 5-phosphate reductoisomerase (Xanthomonas euvesicatoria pv. vesicatoria (strain 85-10) (Xanthomonas campestris pv. vesicatoria)).